Reading from the N-terminus, the 551-residue chain is Formate--tetrahydrofolate ligase (551 aa).

Position 65-72 (65-72 (TPAGEGKT)) interacts with ATP.

It belongs to the formate--tetrahydrofolate ligase family.

It catalyses the reaction (6S)-5,6,7,8-tetrahydrofolate + formate + ATP = (6R)-10-formyltetrahydrofolate + ADP + phosphate. It participates in one-carbon metabolism; tetrahydrofolate interconversion. This chain is Formate--tetrahydrofolate ligase, found in Thermosipho africanus (strain TCF52B).